The chain runs to 588 residues: Adenine deaminase (588 aa).

It belongs to the metallo-dependent hydrolases superfamily. Adenine deaminase family. Homodimer. Mn(2+) is required as a cofactor.

The enzyme catalyses adenine + H2O + H(+) = hypoxanthine + NH4(+). The polypeptide is Adenine deaminase (Shigella flexneri serotype 5b (strain 8401)).